The chain runs to 1296 residues: DNA-directed RNA polymerase subunit beta' (1296 aa).

Cysteine 60, cysteine 62, cysteine 75, and cysteine 78 together coordinate Zn(2+). The tract at residues 188 to 209 (GAKGDARRKVRESAEREMRQIR) is disordered. Mg(2+) is bound by residues aspartate 535, aspartate 537, and aspartate 539. Zn(2+)-binding residues include cysteine 877, cysteine 954, cysteine 961, and cysteine 964.

Belongs to the RNA polymerase beta' chain family. As to quaternary structure, the RNAP catalytic core consists of 2 alpha, 1 beta, 1 beta' and 1 omega subunit. When a sigma factor is associated with the core the holoenzyme is formed, which can initiate transcription. It depends on Mg(2+) as a cofactor. Zn(2+) is required as a cofactor.

The enzyme catalyses RNA(n) + a ribonucleoside 5'-triphosphate = RNA(n+1) + diphosphate. DNA-dependent RNA polymerase catalyzes the transcription of DNA into RNA using the four ribonucleoside triphosphates as substrates. This Parafrankia sp. (strain EAN1pec) protein is DNA-directed RNA polymerase subunit beta'.